The following is a 753-amino-acid chain: Replication restart protein PriA (753 aa).

Positions 228-395 (SLITTKFQTC…LSKKYTLSVL (168 aa)) constitute a Helicase ATP-binding domain. 241–248 (GVTGSGKT) contacts ATP. Residues 337-340 (DEEH) carry the DEAH box motif. The Zn(2+) site is built by Cys-458, Cys-461, Cys-467, Cys-470, Cys-485, Cys-488, Cys-499, and Cys-502. The region spanning 491 to 646 (RLSKPITSCP…DFPAFYKEEI (156 aa)) is the Helicase C-terminal domain.

It belongs to the helicase family. PriA subfamily. In terms of assembly, component of the replication restart primosome. Zn(2+) is required as a cofactor.

The catalysed reaction is Couples ATP hydrolysis with the unwinding of duplex DNA by translocating in the 3'-5' direction.. It carries out the reaction ATP + H2O = ADP + phosphate + H(+). In terms of biological role, initiates the restart of stalled replication forks, which reloads the replicative helicase on sites other than the origin of replication. Recognizes and binds to abandoned replication forks and remodels them to uncover a helicase loading site. Promotes assembly of the primosome at these replication forks. The polypeptide is Replication restart protein PriA (Chlamydia muridarum (strain MoPn / Nigg)).